The sequence spans 430 residues: Centrosomal protein CEP57L1 (430 aa).

A Phosphoserine modification is found at Ser45. Positions 46–213 (PNNQALVSAL…HQRRLFQDRA (168 aa)) form a coiled coil. 2 disordered regions span residues 248 to 290 (CLKR…GEPF) and 362 to 430 (RKLQ…KWEQ). Basic and acidic residues-rich tracts occupy residues 249-272 (LKREPPQHTDCRFRGPASERERPP), 362-372 (RKLQEKVENSR), and 421-430 (LRRDDVKWEQ). Residues 290-377 (FSICDNLSEL…VENSRINESS (88 aa)) are a coiled coil.

Belongs to the translokin family.

It is found in the cytoplasm. The protein resides in the cytoskeleton. It localises to the microtubule organizing center. The protein localises to the centrosome. Functionally, centrosomal protein which may be required for microtubule attachment to centrosomes. This is Centrosomal protein CEP57L1 (Cep57l1) from Rattus norvegicus (Rat).